Here is a 138-residue protein sequence, read N- to C-terminus: MRTLWIVAVCLIGVEGSLLEFGMMILGETGKNPLTSYSFYGCYCGVGGKGTPKDATDRCCFVHDCCYGNLPDCSPKTDRYKYHRENGAIVCGKGTSCENRICECDRAAAICFRKNLKTYNHIYMYYPDFLCKKESEKC.

The signal sequence occupies residues 1–16 (MRTLWIVAVCLIGVEG). 7 cysteine pairs are disulfide-bonded: Cys42–Cys131, Cys44–Cys60, Cys59–Cys111, Cys65–Cys138, Cys66–Cys104, Cys73–Cys97, and Cys91–Cys102. Residues Tyr43, Gly45, and Gly47 each contribute to the Ca(2+) site. The active site involves His63. Asp64 contacts Ca(2+). Residue Asp105 is part of the active site.

This sequence belongs to the phospholipase A2 family. Group II subfamily. D49 sub-subfamily. In terms of assembly, monomer. Binds to calmodulin, coagulation factor X (F10), M-type PLA2 receptor (R-180), 14-3-3 proteins gamma (YWHAG) and epsilon (YWHAE), and R25, a mitochondrial membrane protein. Ca(2+) is required as a cofactor. As to expression, expressed by the venom gland.

It is found in the secreted. It localises to the host cytoplasm. The protein localises to the host cytosol. The enzyme catalyses a 1,2-diacyl-sn-glycero-3-phosphocholine + H2O = a 1-acyl-sn-glycero-3-phosphocholine + a fatty acid + H(+). In terms of biological role, snake venom phospholipase A2 (PLA2) that acts as a presynaptic neurotoxin, an inhibitor of blood coagulation, and has been found to bind with high affinity to intracellular proteins. The response of indirectly stimulated neuromuscular preparations to ammodytoxin (Atx) is triphasic. The first phase, the transient inhibition of the acetylcholine (ACh) release, starts soon after the addition of Atx and lasts for several minutes. This phase is probably independent of Atx enzymatic activity. The effect may be due to the specific binding of the toxin to presynaptic receptors. These receptors, called N-type receptors, are still unidentified. It is noteworthy that a neuronal isoform of the M-type PLA2 receptor (R180) has been identified as a high-affinity receptor for Atx in neuronal plasma membranes. It was demonstrated however that this receptor is not essential for expression of neurotoxicity by Atx. The second phase corresponds to an augmentation of neurotransmitter release. A peak is reached 10-20 minutes after exposure of the preparation to Atx and is followed by a gradual reduction. In this phase, the enzymatic activity of Atx of the mammalian is not significant. It is speculated that the increased release of neurotransmitter in this phase is induced by the interference of Atx with voltage-gated potassium channels. Measurements of ionic currents showed however that voltage-gated potassium channels are not affected by Atx. The third phase of the response of neuromuscular preparations to Atx, which corresponds to a complete and irreversible paralysis, is clearly dependent on the hydrolytic activity of the toxin. In addition to its presynaptic neurotoxicity, Atx shows an anticoagulant activity by binding with high affinity to activated coagulation factor X (F10) thus inhibiting the formation of the prothrombinase complex (FX/FV) and its activity (IC(50) is 82 nM). Surprisingly, Atx was discovered to bind intracellular proteins such as calmodulin (CaM), 14-3-3 proteins gamma (YWHAG) and epsilon (YWHAE) (by similarity with AtxC), as well as R25 (by similarity with AtxC), a mitochondrial integral membrane protein found in cerebral cortex. These findings raised a doubt about the dogma of the exclusively extracellular action of PLA2s, defended by the potential instability of these molecules in the reducing environment of the eukaryotic cytosol coupled with their possible inability to act as enzymes in this cellular compartment, due to too low concentration of calcium ions. This hypothesis was challenged efficiently by demonstrating the internalization of AtxA into a culture cells, but still remains to be directly demonstrated in vivo. PLA2 catalyzes the calcium-dependent hydrolysis of the 2-acyl groups in 3-sn-phosphoglycerides. In Vipera ammodytes ammodytes (Western sand viper), this protein is Basic phospholipase A2 ammodytoxin B.